The chain runs to 810 residues: Transmembrane channel-like protein 6 (810 aa).

A disordered region spans residues 1–26 (MAQSLALALDVPETTGDEGLEPSPYE). Residues 1–205 (MAQSLALALD…GAFSCCSRLR (205 aa)) are Lumenal-facing. Residues 15 to 26 (TGDEGLEPSPYE) are compositionally biased toward acidic residues. Thr-88 is subject to Phosphothreonine. Arg-93 carries the omega-N-methylarginine modification. The N-linked (GlcNAc...) asparagine glycan is linked to Asn-102. Thr-104 carries the phosphothreonine modification. The residue at position 136 (Ser-136) is a Phosphoserine. A helical membrane pass occupies residues 206–226 (YTCMLALHSLGLALLSGLYAA). The Cytoplasmic portion of the chain corresponds to 227–253 (RPWRYALKQIGGQFGSSVLSYFLFLKT). The helical transmembrane segment at 254-274 (LLAFNALMLLPLLAFLVGVQA) threads the bilayer. At 275-338 (AFPPDPAGPV…PRLGSLPYNM (64 aa)) the chain is on the lumenal side. Asn-311 carries N-linked (GlcNAc...) asparagine glycosylation. The helical transmembrane segment at 339 to 359 (PLAYLFTMGATFFLTCIILVY) threads the bilayer. The Cytoplasmic segment spans residues 360–429 (SMSHSFGESY…PRSVCGQLRQ (70 aa)). Residues 430–450 (VVVLGLGWLLCLGSTMGCTVA) traverse the membrane as a helical segment. Over 451–468 (VLTFSEVMIQRPASGGQG) the chain is Lumenal. Residues 469–489 (VEALALPLVVSVLNLGASYLF) form a helical membrane-spanning segment. Over 490-504 (RGLATLERHDSPVLE) the chain is Cytoplasmic. A helical transmembrane segment spans residues 505-525 (VYMAICRNLILKMAVLGVLCY). Over 526 to 552 (HWLGRRVATLQGQCWEDFVGQELYRFM) the chain is Lumenal. The helical transmembrane segment at 553 to 573 (VVDFIFMLLDSLFGELVWRLI) threads the bilayer. The Cytoplasmic portion of the chain corresponds to 574 to 603 (SEKKLKRGQKPEFDIARNVLDLIYGQTLTW). A helical transmembrane segment spans residues 604 to 624 (LGVLFSPLLPAVQILRLLFLF). Residues 625 to 649 (HIKKASLMANCQAPRRPWLASHMST) lie on the Lumenal side of the membrane. A helical membrane pass occupies residues 650 to 670 (VFLTLLCFPSFLGAAVFLCYA). Topologically, residues 671-721 (VWQVRPSSTCGPFRTLNTMYEAGTVWVRRLEHAGSGASWLPWLHHFLVENT) are cytoplasmic. The helical transmembrane segment at 722–742 (FFLFLASALLLAVIYFNIQVV) threads the bilayer. The Lumenal segment spans residues 743–810 (KGQRKVICLL…QKEPCNPRSP (68 aa)). The disordered stretch occupies residues 775–810 (EEEGRSRPGRTQDATEPPAWHEDGGDQKEPCNPRSP). A compositionally biased stretch (basic and acidic residues) spans 793–810 (AWHEDGGDQKEPCNPRSP).

It belongs to the TMC family. As to quaternary structure, interacts with TMC8. Interacts and forms a complex with TMC8 and CIB1; the interaction stabilizes each component of the complex. Interacts and forms a complex with TMC8 and SLC30A1/ZNT1; the interaction regulates zinc transport into the ER. In terms of tissue distribution, widely expressed. Highly expressed in thymus, lung and spleen. Expressed in lymphocytes and peripheral lymphocytes. Expressed in small and medium dorsal root ganglion (DRG) neurons.

Its subcellular location is the endoplasmic reticulum membrane. Its function is as follows. Acts as a regulatory protein involved in the regulation of numerous cellular processes. Together with its homolog TMC8/EVER2, forms a complex with calcium-binding protein CIB1 in lymphocytes and keratynocytes where TMC6 and TMC8 stabilize CIB1 and reciprocally. Together with TMC8, also forms a complex with and activates zinc transporter ZNT1 at the ER membrane of keratynocytes, thereby facilitating zinc uptake into the ER. Down-regulates the activity of transcription factors induced by zinc and cytokines. Also plays a role in thermal sensation by inhibiting the M-channel (KCNQ2-KCNQ3 channel) current in primary sensory neurons. The sequence is that of Transmembrane channel-like protein 6 from Mus musculus (Mouse).